Here is a 357-residue protein sequence, read N- to C-terminus: 3-dehydroquinate synthase (357 aa).

NAD(+)-binding positions include Asp-69 to Lys-74, Gly-103 to Asp-107, Thr-127 to Thr-128, Lys-140, and Lys-149. Zn(2+)-binding residues include Glu-182, His-245, and His-262.

Belongs to the sugar phosphate cyclases superfamily. Dehydroquinate synthase family. Requires Co(2+) as cofactor. Zn(2+) is required as a cofactor. It depends on NAD(+) as a cofactor.

The protein resides in the cytoplasm. The catalysed reaction is 7-phospho-2-dehydro-3-deoxy-D-arabino-heptonate = 3-dehydroquinate + phosphate. Its pathway is metabolic intermediate biosynthesis; chorismate biosynthesis; chorismate from D-erythrose 4-phosphate and phosphoenolpyruvate: step 2/7. Functionally, catalyzes the conversion of 3-deoxy-D-arabino-heptulosonate 7-phosphate (DAHP) to dehydroquinate (DHQ). The protein is 3-dehydroquinate synthase of Shewanella denitrificans (strain OS217 / ATCC BAA-1090 / DSM 15013).